The sequence spans 241 residues: Type III pantothenate kinase (241 aa).

6–13 (DVGNTRIK) is a binding site for ATP. Position 94–97 (94–97 (GIDR)) interacts with substrate. Asp96 functions as the Proton acceptor in the catalytic mechanism. K(+) is bound at residue Asp117. Thr120 is an ATP binding site. A substrate-binding site is contributed by Thr172.

It belongs to the type III pantothenate kinase family. In terms of assembly, homodimer. The cofactor is NH4(+). K(+) is required as a cofactor.

It localises to the cytoplasm. It carries out the reaction (R)-pantothenate + ATP = (R)-4'-phosphopantothenate + ADP + H(+). It functions in the pathway cofactor biosynthesis; coenzyme A biosynthesis; CoA from (R)-pantothenate: step 1/5. Its function is as follows. Catalyzes the phosphorylation of pantothenate (Pan), the first step in CoA biosynthesis. This Flavobacterium psychrophilum (strain ATCC 49511 / DSM 21280 / CIP 103535 / JIP02/86) protein is Type III pantothenate kinase.